We begin with the raw amino-acid sequence, 404 residues long: MESSSSSSYIPFIRQIAASVSAASCDAVVGGGGDKDEECRDEAAALRLKMVAVAAILIAGAAGVAIPLVGRRRRGGGGGGGGGASSGGLFVLAKAFAAGVILATGFVHMLHDAEHALSNPCLPHSPWRRFPFPGFVAMLAALATLVVDFVGTHFYERKHRQEEAAAAAEEAAAALLEDGGALPVGDGEGRDGRGGKRDAMHIVGIHAHAAAHRHSHAHVHGACHGGAVNDAHAHGHGHGHEEGPSARHVVVSQILELGIVSHSVIIGLSLGVSQSPCTIKPLVAALSFHQFFEGFALGGCISEAQLKNFSAFLMAFFFAITTPAGITVGAAVASFYNPNSPRALVVEGILDSMSAGILIYMALVDLIAADFLSRKMSCNPRLQVGSYIALFLGAMAMAALALWA.

Residues 1 to 22 form the signal peptide; the sequence is MESSSSSSYIPFIRQIAASVSA. At 23 to 49 the chain is on the extracellular side; the sequence is ASCDAVVGGGGDKDEECRDEAAALRLK. Residues 50–70 traverse the membrane as a helical segment; sequence MVAVAAILIAGAAGVAIPLVG. The Cytoplasmic segment spans residues 71-86; the sequence is RRRRGGGGGGGGGASS. A helical membrane pass occupies residues 87 to 107; it reads GGLFVLAKAFAAGVILATGFV. The Extracellular segment spans residues 108–129; that stretch reads HMLHDAEHALSNPCLPHSPWRR. The helical transmembrane segment at 130 to 150 threads the bilayer; the sequence is FPFPGFVAMLAALATLVVDFV. Residues 151 to 248 are Cytoplasmic-facing; it reads GTHFYERKHR…GHEEGPSARH (98 aa). A helical transmembrane segment spans residues 249 to 269; it reads VVVSQILELGIVSHSVIIGLS. The Extracellular segment spans residues 270–280; it reads LGVSQSPCTIK. Residues 281-301 traverse the membrane as a helical segment; the sequence is PLVAALSFHQFFEGFALGGCI. Over 302–311 the chain is Cytoplasmic; it reads SEAQLKNFSA. The helical transmembrane segment at 312–332 threads the bilayer; sequence FLMAFFFAITTPAGITVGAAV. Over 333-343 the chain is Extracellular; that stretch reads ASFYNPNSPRA. A helical membrane pass occupies residues 344-364; that stretch reads LVVEGILDSMSAGILIYMALV. Topologically, residues 365-383 are cytoplasmic; it reads DLIAADFLSRKMSCNPRLQ. A helical transmembrane segment spans residues 384 to 404; that stretch reads VGSYIALFLGAMAMAALALWA.

It belongs to the ZIP transporter (TC 2.A.5) family.

It is found in the cell membrane. Zinc transporter that may be involved in zinc uptake from the rhizosphere. The polypeptide is Zinc transporter 10 (ZIP10) (Oryza sativa subsp. japonica (Rice)).